A 191-amino-acid chain; its full sequence is Potassium-transporting ATPase KdpC subunit (191 aa).

Residues 10-30 form a helical membrane-spanning segment; sequence ITLVFCVFFSVFYILVLWLFA.

The protein belongs to the KdpC family. In terms of assembly, the system is composed of three essential subunits: KdpA, KdpB and KdpC.

It localises to the cell inner membrane. In terms of biological role, part of the high-affinity ATP-driven potassium transport (or Kdp) system, which catalyzes the hydrolysis of ATP coupled with the electrogenic transport of potassium into the cytoplasm. This subunit acts as a catalytic chaperone that increases the ATP-binding affinity of the ATP-hydrolyzing subunit KdpB by the formation of a transient KdpB/KdpC/ATP ternary complex. This is Potassium-transporting ATPase KdpC subunit from Bacteroides fragilis (strain ATCC 25285 / DSM 2151 / CCUG 4856 / JCM 11019 / LMG 10263 / NCTC 9343 / Onslow / VPI 2553 / EN-2).